The following is a 725-amino-acid chain: Malate synthase G 2 (725 aa).

Acetyl-CoA is bound by residues Val-118, 125-126 (RY), Ser-276, and Arg-313. The active-site Proton acceptor is Arg-340. Residues Arg-340, Glu-429, and 454 to 457 (GFLD) each bind glyoxylate. 2 residues coordinate Mg(2+): Glu-429 and Asp-457. Residue Pro-538 coordinates acetyl-CoA. A Cysteine sulfenic acid (-SOH) modification is found at Cys-619. Catalysis depends on Asp-633, which acts as the Proton donor.

The protein belongs to the malate synthase family. GlcB subfamily. In terms of assembly, monomer. Mg(2+) is required as a cofactor.

Its subcellular location is the cytoplasm. The catalysed reaction is glyoxylate + acetyl-CoA + H2O = (S)-malate + CoA + H(+). The protein operates within carbohydrate metabolism; glyoxylate cycle; (S)-malate from isocitrate: step 2/2. Involved in the glycolate utilization. Catalyzes the condensation and subsequent hydrolysis of acetyl-coenzyme A (acetyl-CoA) and glyoxylate to form malate and CoA. The sequence is that of Malate synthase G 2 from Pseudomonas syringae pv. tomato (strain ATCC BAA-871 / DC3000).